The primary structure comprises 615 residues: Dihydroxy-acid dehydratase (615 aa).

Residue aspartate 81 participates in Mg(2+) binding. Cysteine 122 provides a ligand contact to [2Fe-2S] cluster. Mg(2+)-binding residues include aspartate 123 and lysine 124. Position 124 is an N6-carboxylysine (lysine 124). Cysteine 193 lines the [2Fe-2S] cluster pocket. Mg(2+) is bound at residue glutamate 489. Serine 515 serves as the catalytic Proton acceptor.

Belongs to the IlvD/Edd family. In terms of assembly, homodimer. [2Fe-2S] cluster is required as a cofactor. It depends on Mg(2+) as a cofactor.

It catalyses the reaction (2R)-2,3-dihydroxy-3-methylbutanoate = 3-methyl-2-oxobutanoate + H2O. It carries out the reaction (2R,3R)-2,3-dihydroxy-3-methylpentanoate = (S)-3-methyl-2-oxopentanoate + H2O. Its pathway is amino-acid biosynthesis; L-isoleucine biosynthesis; L-isoleucine from 2-oxobutanoate: step 3/4. It functions in the pathway amino-acid biosynthesis; L-valine biosynthesis; L-valine from pyruvate: step 3/4. Functionally, functions in the biosynthesis of branched-chain amino acids. Catalyzes the dehydration of (2R,3R)-2,3-dihydroxy-3-methylpentanoate (2,3-dihydroxy-3-methylvalerate) into 2-oxo-3-methylpentanoate (2-oxo-3-methylvalerate) and of (2R)-2,3-dihydroxy-3-methylbutanoate (2,3-dihydroxyisovalerate) into 2-oxo-3-methylbutanoate (2-oxoisovalerate), the penultimate precursor to L-isoleucine and L-valine, respectively. The sequence is that of Dihydroxy-acid dehydratase from Pseudomonas syringae pv. syringae (strain B728a).